Here is a 757-residue protein sequence, read N- to C-terminus: MNLKVLLLLLGLSFLTVFALVYVLLTRQGSFSQSPRCPSIPPRIHPWTHPSQSQLFADLTPEELTAVMSFLTKHLGPGLVDAAQARPSDNCVFSVELQLPAKAAALAHLDRGGPPPVREALAIIFFGGQPKPNVSELVVGPLPHPSYMRDVTVERHGGPLPYYRRPMQKTEFVQIWRHLKEVELPKAPTFLASVLNYNGSTLAPLHSTASGFHAGDRATWIALYHNISGLGVFLHPVGLELLLDHGALDPADWVVQQVFYLGHYYADLAQLEWEFKVGRLEVIRVPLPTPGGASSLRPRVTPDPPLPPLQFSLQGPQYNIQGNSVTSPLWTFTFGHGVFSGLRIFDIRFKGERVAYEVSVQECLTVYGADSPKTMTIRYLDSSYGLGLNSRALVRGVDCPYQATMVDIHVLVGTGSVQLLPGAVCVFEEAQGLPLRRHHNGIGGHFYGGLASSSLVVRSVSSVGNYDYIWDFMLHPTGALEARVHATGYINTAFMSGGAESLLFGNRVGERVLGAVHTHAFHFKLDLDVAGLKNWVIAEDAVFKPVAAPWNPELQLQRPQLTRQVLSREDLAAFPWGSPLPRYLYLATNQTNAWGHQRGYRIQIHSPPGVHVPLESSEERALSWGRYQLVVTQRKEAEPHSSSIYYQNDMRSPATVFADFINNETLLGEDLVAWVTASFLHIPHAEDIPNTVTVGNRVGFLLRPYNFFNEDPSIFSPGSVYFERDQDAGLCSINPVACTQQLADCVPNLPSFSYEGL.

Topologically, residues M1 to K4 are cytoplasmic. A helical membrane pass occupies residues V5–L25. Topologically, residues T26–L757 are extracellular. N-linked (GlcNAc...) asparagine glycosylation is found at N133, N198, and N226. D381 acts as the Proton acceptor in catalysis. C399 and C425 form a disulfide bridge. Catalysis depends on Y466, which acts as the Schiff-base intermediate with substrate; via topaquinone. Y466 is subject to 2',4',5'-topaquinone. Cu(2+) contacts are provided by H517 and H519. Ca(2+) contacts are provided by D526, L527, D528, E569, E638, F660, and N662. An N-linked (GlcNAc...) asparagine glycan is attached at N663. 3 residues coordinate Ca(2+): E664, D670, and L671. H681 contributes to the Cu(2+) binding site. C731 and C738 form a disulfide bridge.

It belongs to the copper/topaquinone oxidase family. Homodimer; disulfide-linked. Probably forms heterodimers with AOC3. Requires Cu(2+) as cofactor. The cofactor is Ca(2+). It depends on L-topaquinone as a cofactor. Topaquinone (TPQ) is generated by copper-dependent autoxidation of a specific tyrosyl residue. As to expression, significantly much highly expressed in retina.

The protein localises to the cell membrane. The enzyme catalyses 2-phenylethylamine + O2 + H2O = 2-phenylacetaldehyde + H2O2 + NH4(+). It catalyses the reaction tryptamine + O2 + H2O = indole-3-acetaldehyde + H2O2 + NH4(+). It carries out the reaction tyramine + O2 + H2O = (4-hydroxyphenyl)acetaldehyde + H2O2 + NH4(+). Functionally, catalyzes the oxidative deamination of primary amines to the corresponding aldehydes with the concomitant production of hydrogen peroxide and ammonia. Has a preference for 2-phenylethylamine, tryptamine and tyramine. Could also act on methylamine and benzylamine but much less efficiently. This is Amine oxidase [copper-containing] 2 from Mus musculus (Mouse).